Here is a 912-residue protein sequence, read N- to C-terminus: DNA (cytosine-5)-methyltransferase 3A (912 aa).

Disordered stretches follow at residues 1 to 178 (MPAM…GWES) and 221 to 286 (IAGM…EYED). Residues 17-40 (AEREEDRKDGEEQEEPRGKEERQE) show a composition bias toward basic and acidic residues. A compositionally biased stretch (basic residues) spans 47-57 (KVGRPGRKRKH). Residues 74-83 (KSPSMAQDSG) show a composition bias toward polar residues. The residue at position 105 (Ser-105) is a Phosphoserine. Residues 113 to 128 (GAPAEGEGAAETLPEA) are compositionally biased toward low complexity. Thr-124 carries the post-translational modification Phosphothreonine. Residues 149–167 (AGKEQKETNIESMKMEGSR) show a composition bias toward basic and acidic residues. A Glycyl lysine isopeptide (Lys-Gly) (interchain with G-Cter in SUMO2) cross-link involves residue Lys-162. Residue Arg-171 is modified to Omega-N-methylarginine. Residues 199–403 (SKRKRDEWLA…DTAKAVEVQN (205 aa)) form an interaction with DNMT1 and DNMT3B region. 2 positions are modified to phosphoserine: Ser-243 and Ser-255. Over residues 246 to 260 (AVQQPTDPASPTVAT) the composition is skewed to polar residues. Thr-261 bears the Phosphothreonine mark. The residue at position 267 (Ser-267) is a Phosphoserine. Residues 269–279 (AGDKNATKAGD) show a composition bias toward basic and acidic residues. In terms of domain architecture, PWWP spans 292 to 350 (IGELVWGKLRGFSWWPGRIVSWWMTGRSRAAEGTRWVMWFGDGKFSVVCVEKLMPLSSF). Residues Ser-390 and Ser-393 each carry the phosphoserine modification. A disordered region spans residues 447–466 (AYAPPPPAKKPRKSTAEKPK). Positions 482–614 (EVRQKCRNIE…LQMFFANNHD (133 aa)) constitute an ADD domain. The GATA-type; atypical zinc-finger motif lies at 493–523 (ICISCGSLNVTLEHPLFVGGMCQNCKNCFLE). The tract at residues 494 to 586 (CISCGSLNVT…KEDPWNCYMC (93 aa)) is interaction with the PRC2/EED-EZH2 complex. The PHD-type; atypical zinc finger occupies 534-590 (QSYCTICCGGREVLMCGNNNCCRCFCVECVDLLVGPGAAQAAIKEDPWNCYMCGHKG). Residues 634–912 (IRVLSLFDGI…APLKEYFACV (279 aa)) enclose the SAM-dependent MTase C5-type domain. S-adenosyl-L-methionine is bound by residues 641 to 645 (DGIAT), Glu-664, and 686 to 688 (DVR). Cys-710 is an active-site residue. Cys-710 is modified (S-methylcysteine; by autocatalysis). 891–893 (RSW) serves as a coordination point for S-adenosyl-L-methionine.

The protein belongs to the class I-like SAM-binding methyltransferase superfamily. C5-methyltransferase family. In terms of assembly, heterotetramer composed of 1 DNMT3A homodimer and 2 DNMT3L subunits (DNMT3L-DNMT3A-DNMT3A-DNMT3L). Interacts with UBC9, PIAS1 and PIAS2. Binds the ZBTB18 transcriptional repressor. Interacts with SETDB1. Associates with HDAC1 through its ADD domain. Interacts with UHRF1. Interacts with DNMT1 and DNMT3B. Interacts with the PRC2/EED-EZH2 complex. Interacts with MPHOSPH8. Interacts with histone H3 that is not methylated at 'Lys-4' (H3K4). Interacts with SPOCD1. Interacts with ZNF263; recruited to the SIX3 promoter along with other proteins involved in chromatin modification and transcriptional corepression where it contributes to transcriptional repression. In terms of processing, sumoylated; sumoylation disrupts the ability to interact with histone deacetylases (HDAC1 and HDAC2) and repress transcription. Auto-methylated at Cys-710: auto-methylation takes place in absence of DNA substrate and inactivates the DNA methyltransferase activity. Inactivation by auto-methylation may be used to inactivate unused DNA methyltransferases in the cell. In terms of tissue distribution, highly expressed in fetal tissues, skeletal muscle, heart, peripheral blood mononuclear cells, kidney, and at lower levels in placenta, brain, liver, colon, spleen, small intestine and lung.

The protein localises to the nucleus. The protein resides in the chromosome. It localises to the cytoplasm. It catalyses the reaction a 2'-deoxycytidine in DNA + S-adenosyl-L-methionine = a 5-methyl-2'-deoxycytidine in DNA + S-adenosyl-L-homocysteine + H(+). It carries out the reaction L-cysteinyl-[protein] + S-adenosyl-L-methionine = S-methyl-L-cysteinyl-[protein] + S-adenosyl-L-homocysteine + H(+). With respect to regulation, activated by binding to the regulatory factor DNMT3L. Auto-methylation at Cys-710 in absence of DNA inactivates the DNA methyltransferase activity. Required for genome-wide de novo methylation and is essential for the establishment of DNA methylation patterns during development. DNA methylation is coordinated with methylation of histones. It modifies DNA in a non-processive manner and also methylates non-CpG sites. May preferentially methylate DNA linker between 2 nucleosomal cores and is inhibited by histone H1. Plays a role in paternal and maternal imprinting. Required for methylation of most imprinted loci in germ cells. Acts as a transcriptional corepressor for ZBTB18. Recruited to trimethylated 'Lys-36' of histone H3 (H3K36me3) sites. Can actively repress transcription through the recruitment of HDAC activity. Also has weak auto-methylation activity on Cys-710 in absence of DNA. This Homo sapiens (Human) protein is DNA (cytosine-5)-methyltransferase 3A (DNMT3A).